The following is a 92-amino-acid chain: Small ribosomal subunit protein uS15 (92 aa).

The protein belongs to the universal ribosomal protein uS15 family. In terms of assembly, part of the 30S ribosomal subunit. Forms a bridge to the 50S subunit in the 70S ribosome, contacting the 23S rRNA.

Functionally, one of the primary rRNA binding proteins, it binds directly to 16S rRNA where it helps nucleate assembly of the platform of the 30S subunit by binding and bridging several RNA helices of the 16S rRNA. Forms an intersubunit bridge (bridge B4) with the 23S rRNA of the 50S subunit in the ribosome. This chain is Small ribosomal subunit protein uS15, found in Symbiobacterium thermophilum (strain DSM 24528 / JCM 14929 / IAM 14863 / T).